Here is a 343-residue protein sequence, read N- to C-terminus: MVSTEDFDYNLPEELIAQTPMIERAASRLLVMDHETGALEDKVFYDIIDELNPGDAVVMNNTRVLPARLYGVKPDTGGHEEVLLLNNTHDDEWEVLMKPAKRAKVGTEVVFGDGQLRAIVTKELEHGGRMIEFKYDGIFMQILEALGEMPLPPYIKEKLDDPEMYQTVYAKEPGSAAAPTAGFHWTEELLQKVQDKGIKLVYLTLHVGLGTFRPVSEDNVEDHKMHSEFYRLTEEAAATLNEVKQNGGRIVATGTTSIRTLETIATKFDGEIKADSGWTEIFIKPGYQWKAVDAFITNFHLPKSTLVMLVASFTGRENILNAYQHAVDERYRFFSFGDAMFVK.

The protein belongs to the QueA family. As to quaternary structure, monomer.

Its subcellular location is the cytoplasm. The catalysed reaction is 7-aminomethyl-7-carbaguanosine(34) in tRNA + S-adenosyl-L-methionine = epoxyqueuosine(34) in tRNA + adenine + L-methionine + 2 H(+). It participates in tRNA modification; tRNA-queuosine biosynthesis. In terms of biological role, transfers and isomerizes the ribose moiety from AdoMet to the 7-aminomethyl group of 7-deazaguanine (preQ1-tRNA) to give epoxyqueuosine (oQ-tRNA). The protein is S-adenosylmethionine:tRNA ribosyltransferase-isomerase of Latilactobacillus sakei subsp. sakei (strain 23K) (Lactobacillus sakei subsp. sakei).